Consider the following 855-residue polypeptide: Vomeronasal type-2 receptor 26 (855 aa).

Residues 1–22 form the signal peptide; it reads MKLLTAFSPLVVLILFQEQISC. Residues 23 to 595 are Extracellular-facing; sequence YYLTKYASSG…FLAHEDPLGT (573 aa). N-linked (GlcNAc...) asparagine glycans are attached at residues Asn101 and Asn295. A helical membrane pass occupies residues 596-616; it reads VLVSLAISLSAFSAMILGLFI. Residues 617-630 are Cytoplasmic-facing; that stretch reads CYRETPIVRANNRN. The helical transmembrane segment at 631 to 651 threads the bilayer; the sequence is LSYLLLISLKLCFSCSLMFIG. Residues 652 to 662 are Extracellular-facing; the sequence is QPRTVTCVLRQ. The helical transmembrane segment at 663-683 threads the bilayer; the sequence is IIFGIVFSIVISAILAKTFIV. Topologically, residues 684–706 are cytoplasmic; that stretch reads VMAFKAIKPGSILKMGMVTRLSN. A helical transmembrane segment spans residues 707–727; the sequence is AIVCCGSIIQVCICAVWLGTY. At 728-753 the chain is on the extracellular side; sequence PPFPDVDMHSEFGQIILWCNEGSTLA. A helical transmembrane segment spans residues 754 to 774; the sequence is FYCVLGYLGFLASLSLLIAFL. Residues 775–786 are Cytoplasmic-facing; the sequence is ARRLPDSFNEAK. A helical membrane pass occupies residues 787-807; that stretch reads TITFSMLVFCSVWISFVPAYL. The Extracellular segment spans residues 808–814; the sequence is SSKGKTM. A helical transmembrane segment spans residues 815–835; sequence VAVEILSILASSAGLLGCIFL. The Cytoplasmic segment spans residues 836-855; it reads PKCYVILLKSGGHSRKKFFK.

Belongs to the G-protein coupled receptor 3 family. Expressed in the basal epithelium of the vomeronasal organ. Located to vomeronasal sensory neurons that project their axons to six to ten glomeruli that reside in globally conserved areas within the caudal accessory olfactory bulb (AOB).

It is found in the cell membrane. Functionally, putative pheromone receptor. In Mus musculus (Mouse), this protein is Vomeronasal type-2 receptor 26 (Vmn2r26).